The chain runs to 55 residues: Ovomucoid (55 aa).

The 51-residue stretch at 5 to 55 folds into the Kazal-like domain; the sequence is VDCSEHPKPACTLDYRPICGSDSKTYSNKCDFCNAVMDSNGTLTLSHFGKC. Disulfide bonds link Cys-7–Cys-37, Cys-15–Cys-34, and Cys-23–Cys-55. The N-linked (GlcNAc...) asparagine glycan is linked to Asn-44.

The protein localises to the secreted. This Dacelo novaeguineae (Laughing kookaburra) protein is Ovomucoid.